We begin with the raw amino-acid sequence, 84 residues long: UPF0457 protein BALH_2270 (84 aa).

Belongs to the UPF0457 family.

The chain is UPF0457 protein BALH_2270 from Bacillus thuringiensis (strain Al Hakam).